We begin with the raw amino-acid sequence, 542 residues long: Chaperonin GroEL 1 (542 aa).

ATP contacts are provided by residues 30-33, Lys51, 87-91, Gly415, 480-482, and Asp496; these read TLGP, DGTTT, and NAA.

Belongs to the chaperonin (HSP60) family. In terms of assembly, forms a cylinder of 14 subunits composed of two heptameric rings stacked back-to-back. Interacts with the co-chaperonin GroES.

The protein localises to the cytoplasm. The catalysed reaction is ATP + H2O + a folded polypeptide = ADP + phosphate + an unfolded polypeptide.. Functionally, together with its co-chaperonin GroES, plays an essential role in assisting protein folding. The GroEL-GroES system forms a nano-cage that allows encapsulation of the non-native substrate proteins and provides a physical environment optimized to promote and accelerate protein folding. The chain is Chaperonin GroEL 1 from Nitrobacter winogradskyi (strain ATCC 25391 / DSM 10237 / CIP 104748 / NCIMB 11846 / Nb-255).